Reading from the N-terminus, the 399-residue chain is Glucosamine kinase (399 aa).

Residues Lys-98, 149–151, and Asp-156 contribute to the ATP site; that span reads EYL. Asp-262 is a binding site for D-glucosamine. Mg(2+) is bound by residues Gln-267, Asp-279, and Asp-281. The Substrate specificity determinant motif motif lies at 366 to 381; that stretch reads QVLREIIYAARHLPRW. Glu-370 is a D-glucosamine binding site.

This sequence belongs to the actinobacterial glucosamine kinase family. In terms of assembly, monomer. It depends on Mg(2+) as a cofactor.

The catalysed reaction is D-glucosamine + ATP = D-glucosamine 6-phosphate + ADP + H(+). Functionally, catalyzes the ATP-dependent phosphorylation of D-glucosamine (GlcN) to D-glucosamine 6-phosphate. May be involved in the phosphorylation of acquired extracellular GlcN derived from the hydrolysis of chitosan, i.e., in the incorporation of exogenous GlcN into the bacterial GlcNAc metabolism. Is unable to phosphorylate maltose. The chain is Glucosamine kinase from Mycolicibacterium smegmatis (strain ATCC 700084 / mc(2)155) (Mycobacterium smegmatis).